We begin with the raw amino-acid sequence, 886 residues long: Pyruvate dehydrogenase E1 component (886 aa).

Homodimer. Part of the PDH complex, consisting of multiple copies of pyruvate dehydrogenase (E1), dihydrolipoamide acetyltransferase (E2) and lipoamide dehydrogenase (E3). Requires thiamine diphosphate as cofactor.

The enzyme catalyses N(6)-[(R)-lipoyl]-L-lysyl-[protein] + pyruvate + H(+) = N(6)-[(R)-S(8)-acetyldihydrolipoyl]-L-lysyl-[protein] + CO2. Its function is as follows. Component of the pyruvate dehydrogenase (PDH) complex, that catalyzes the overall conversion of pyruvate to acetyl-CoA and CO(2). The sequence is that of Pyruvate dehydrogenase E1 component (aceE) from Haemophilus influenzae (strain ATCC 51907 / DSM 11121 / KW20 / Rd).